The following is a 346-amino-acid chain: S-adenosylmethionine:tRNA ribosyltransferase-isomerase (346 aa).

The protein belongs to the QueA family. Monomer.

The protein localises to the cytoplasm. The enzyme catalyses 7-aminomethyl-7-carbaguanosine(34) in tRNA + S-adenosyl-L-methionine = epoxyqueuosine(34) in tRNA + adenine + L-methionine + 2 H(+). It participates in tRNA modification; tRNA-queuosine biosynthesis. Its function is as follows. Transfers and isomerizes the ribose moiety from AdoMet to the 7-aminomethyl group of 7-deazaguanine (preQ1-tRNA) to give epoxyqueuosine (oQ-tRNA). In Lactococcus lactis subsp. cremoris (strain MG1363), this protein is S-adenosylmethionine:tRNA ribosyltransferase-isomerase.